A 513-amino-acid chain; its full sequence is GMP synthase [glutamine-hydrolyzing] (513 aa).

A Glutamine amidotransferase type-1 domain is found at 7–197 (TILVLDFGGQ…LFGVCGCTGE (191 aa)). C84 functions as the Nucleophile in the catalytic mechanism. Catalysis depends on residues H171 and E173. The 190-residue stretch at 198–387 (WTMENFIEEQ…LGLPEDIVWR (190 aa)) folds into the GMPS ATP-PPase domain. Position 225–231 (225–231 (SGGVDSS)) interacts with ATP.

Homodimer.

The enzyme catalyses XMP + L-glutamine + ATP + H2O = GMP + L-glutamate + AMP + diphosphate + 2 H(+). It participates in purine metabolism; GMP biosynthesis; GMP from XMP (L-Gln route): step 1/1. In terms of biological role, catalyzes the synthesis of GMP from XMP. The sequence is that of GMP synthase [glutamine-hydrolyzing] from Heliobacterium modesticaldum (strain ATCC 51547 / Ice1).